The following is a 430-amino-acid chain: tRNA(Ile)-lysidine synthase (430 aa).

27 to 32 (SGGSDS) is a binding site for ATP.

The protein belongs to the tRNA(Ile)-lysidine synthase family.

The protein localises to the cytoplasm. The catalysed reaction is cytidine(34) in tRNA(Ile2) + L-lysine + ATP = lysidine(34) in tRNA(Ile2) + AMP + diphosphate + H(+). Ligates lysine onto the cytidine present at position 34 of the AUA codon-specific tRNA(Ile) that contains the anticodon CAU, in an ATP-dependent manner. Cytidine is converted to lysidine, thus changing the amino acid specificity of the tRNA from methionine to isoleucine. This chain is tRNA(Ile)-lysidine synthase, found in Rickettsia felis (strain ATCC VR-1525 / URRWXCal2) (Rickettsia azadi).